A 66-amino-acid polypeptide reads, in one-letter code: UPF0370 protein YpfN (66 aa).

Residues 4 to 24 (LAKYWWILVLVFLVGVLLNVI) traverse the membrane as a helical segment. The disordered stretch occupies residues 39-66 (KPELPPHRDFNDKWDDEDDWPKKDQPKK). Over residues 42–51 (LPPHRDFNDK) the composition is skewed to basic and acidic residues.

The protein belongs to the UPF0370 family.

It is found in the cell membrane. The sequence is that of UPF0370 protein YpfN from Salmonella paratyphi C (strain RKS4594).